The chain runs to 244 residues: MSTDMETAVVGKVDPEAPQPTHIDVHIHQESALAKLLLAGCSLLRIPASASTQSQGSSRVLVASWVVQTVLGALSVVLGGTLYIGHYLAMYSEGAPFWTGIVAMLAGAVAFLHKKRGGTCWALMRTLLVLASFCTAVAAIVIGSRELNFYWYFLGDDVCQRDSSYGWSTMPRTTPVPEEADRIALCIYYTSMLKTLLMSLQAMLLGIWVLLLLASLTPVCVYIWKRFFTKAETEEKKLLGAAVI.

Phosphoserine is present on serine 42. 4 helical membrane passes run 60–80 (VLVA…VLGG), 92–112 (SEGA…VAFL), 122–142 (ALMR…AIVI), and 204–224 (LLGI…VYIW).

The protein belongs to the TMEM176 family. In terms of assembly, interacts with MCOLN2. Specifically expressed in lung, kidney and spleen.

The protein localises to the membrane. This chain is Transmembrane protein 176A (Tmem176a), found in Mus musculus (Mouse).